The primary structure comprises 530 residues: Autoinducer-2 kinase (530 aa).

It belongs to the FGGY kinase family.

It is found in the cytoplasm. The enzyme catalyses (S)-4,5-dihydroxypentane-2,3-dione + ATP = (2S)-2-hydroxy-3,4-dioxopentyl phosphate + ADP + H(+). Functionally, catalyzes the phosphorylation of autoinducer-2 (AI-2) to phospho-AI-2, which subsequently inactivates the transcriptional regulator LsrR and leads to the transcription of the lsr operon. Phosphorylates the ring-open form of (S)-4,5-dihydroxypentane-2,3-dione (DPD), which is the precursor to all AI-2 signaling molecules, at the C5 position. This chain is Autoinducer-2 kinase, found in Salmonella choleraesuis (strain SC-B67).